Consider the following 151-residue polypeptide: UPF0178 protein Shal_3046 (151 aa).

It belongs to the UPF0178 family.

The polypeptide is UPF0178 protein Shal_3046 (Shewanella halifaxensis (strain HAW-EB4)).